The sequence spans 83 residues: Cytochrome b559 subunit alpha (83 aa).

Residues 21–35 traverse the membrane as a helical segment; that stretch reads VIHSITIPSLFIAGW. Residue His23 participates in heme binding.

The protein belongs to the PsbE/PsbF family. Heterodimer of an alpha subunit and a beta subunit. PSII is composed of 1 copy each of membrane proteins PsbA, PsbB, PsbC, PsbD, PsbE, PsbF, PsbH, PsbI, PsbJ, PsbK, PsbL, PsbM, PsbT, PsbX, PsbY, PsbZ, Psb30/Ycf12, at least 3 peripheral proteins of the oxygen-evolving complex and a large number of cofactors. It forms dimeric complexes. It depends on heme b as a cofactor.

Its subcellular location is the plastid. It is found in the chloroplast thylakoid membrane. In terms of biological role, this b-type cytochrome is tightly associated with the reaction center of photosystem II (PSII). PSII is a light-driven water:plastoquinone oxidoreductase that uses light energy to abstract electrons from H(2)O, generating O(2) and a proton gradient subsequently used for ATP formation. It consists of a core antenna complex that captures photons, and an electron transfer chain that converts photonic excitation into a charge separation. This chain is Cytochrome b559 subunit alpha, found in Chaetosphaeridium globosum (Charophycean green alga).